The primary structure comprises 279 residues: Urease accessory protein UreD (279 aa).

It belongs to the UreD family. In terms of assembly, ureD, UreF and UreG form a complex that acts as a GTP-hydrolysis-dependent molecular chaperone, activating the urease apoprotein by helping to assemble the nickel containing metallocenter of UreC. The UreE protein probably delivers the nickel.

The protein resides in the cytoplasm. In terms of biological role, required for maturation of urease via the functional incorporation of the urease nickel metallocenter. The chain is Urease accessory protein UreD from Nitrosospira multiformis (strain ATCC 25196 / NCIMB 11849 / C 71).